A 317-amino-acid chain; its full sequence is Transaldolase (317 aa).

Lys132 functions as the Schiff-base intermediate with substrate in the catalytic mechanism.

Belongs to the transaldolase family. Type 1 subfamily. As to quaternary structure, homodimer.

The protein localises to the cytoplasm. The enzyme catalyses D-sedoheptulose 7-phosphate + D-glyceraldehyde 3-phosphate = D-erythrose 4-phosphate + beta-D-fructose 6-phosphate. It functions in the pathway carbohydrate degradation; pentose phosphate pathway; D-glyceraldehyde 3-phosphate and beta-D-fructose 6-phosphate from D-ribose 5-phosphate and D-xylulose 5-phosphate (non-oxidative stage): step 2/3. Its function is as follows. Transaldolase is important for the balance of metabolites in the pentose-phosphate pathway. The chain is Transaldolase from Pseudoalteromonas atlantica (strain T6c / ATCC BAA-1087).